A 604-amino-acid polypeptide reads, in one-letter code: UvrABC system protein C (604 aa).

One can recognise a GIY-YIG domain in the interval 12–90; that stretch reads TAPGVYLMRD…IKQHQPRYNL (79 aa). One can recognise a UVR domain in the interval 200–235; the sequence is KDLVSGFRQRMKEAAEGLHYEEAARWRDLLKAIDTT.

Belongs to the UvrC family. In terms of assembly, interacts with UvrB in an incision complex.

The protein resides in the cytoplasm. Its function is as follows. The UvrABC repair system catalyzes the recognition and processing of DNA lesions. UvrC both incises the 5' and 3' sides of the lesion. The N-terminal half is responsible for the 3' incision and the C-terminal half is responsible for the 5' incision. This is UvrABC system protein C from Trichlorobacter lovleyi (strain ATCC BAA-1151 / DSM 17278 / SZ) (Geobacter lovleyi).